Here is a 41-residue protein sequence, read N- to C-terminus: Large ribosomal subunit protein bL36 (41 aa).

The protein belongs to the bacterial ribosomal protein bL36 family.

The chain is Large ribosomal subunit protein bL36 from Bartonella henselae (strain ATCC 49882 / DSM 28221 / CCUG 30454 / Houston 1) (Rochalimaea henselae).